The following is a 289-amino-acid chain: MLTDTSTRLNKYISESGICSRREADRFIEQGNVFINGKRAAIGDQVVAGDVVKVNGRLIEPREADDLVLIALNKPVGIVSTTEDGERDNIVDFVNHSKRIFPIGRLDKDSQGLIFLTNHGDLVNKILRAGNDHEKEYLVTVDKPITDEFIRGMGAGVPILGTVTKKCKVKKEAPFVFRITLVQGLNRQIRRMCEYFGYEVTKLERTRIMNVSLSGIPLGEWRDLTDDELIDLFKLIEGSSSEAKPKAKAKPKTAGIKRPVVAIEKSNEKARPASSGKRFTSPGRKKKGR.

Positions 7-74 constitute an S4 RNA-binding domain; it reads TRLNKYISES…DDLVLIALNK (68 aa). 2 interaction with RNA regions span residues 105–108 and 187–190; these read RLDK and RQIR. Catalysis depends on D107, which acts as the Nucleophile. The tract at residues 241-289 is disordered; that stretch reads SEAKPKAKAKPKTAGIKRPVVAIEKSNEKARPASSGKRFTSPGRKKKGR.

The protein belongs to the pseudouridine synthase RsuA family. Monomer.

The enzyme catalyses uridine(2604) in 23S rRNA = pseudouridine(2604) in 23S rRNA. It carries out the reaction uridine(35) in tRNA(Tyr) = pseudouridine(35) in tRNA(Tyr). Its function is as follows. Dual specificity enzyme that catalyzes the synthesis of pseudouridine from uracil-2604 in 23S ribosomal RNA and from uracil-35 in the anticodon of tRNA(Tyr). This is Dual-specificity RNA pseudouridine synthase RluF (rluF) from Salmonella typhi.